Here is a 370-residue protein sequence, read N- to C-terminus: Anhydro-N-acetylmuramic acid kinase (370 aa).

12–19 (GTSLDGID) is a binding site for ATP.

The protein belongs to the anhydro-N-acetylmuramic acid kinase family.

It carries out the reaction 1,6-anhydro-N-acetyl-beta-muramate + ATP + H2O = N-acetyl-D-muramate 6-phosphate + ADP + H(+). The protein operates within amino-sugar metabolism; 1,6-anhydro-N-acetylmuramate degradation. It functions in the pathway cell wall biogenesis; peptidoglycan recycling. Catalyzes the specific phosphorylation of 1,6-anhydro-N-acetylmuramic acid (anhMurNAc) with the simultaneous cleavage of the 1,6-anhydro ring, generating MurNAc-6-P. Is required for the utilization of anhMurNAc either imported from the medium or derived from its own cell wall murein, and thus plays a role in cell wall recycling. The protein is Anhydro-N-acetylmuramic acid kinase of Yersinia enterocolitica serotype O:8 / biotype 1B (strain NCTC 13174 / 8081).